Here is a 115-residue protein sequence, read N- to C-terminus: UPF0102 protein Kole_1919 (115 aa).

The protein belongs to the UPF0102 family.

The polypeptide is UPF0102 protein Kole_1919 (Kosmotoga olearia (strain ATCC BAA-1733 / DSM 21960 / TBF 19.5.1)).